The following is a 310-amino-acid chain: 4-hydroxyproline 2-epimerase (310 aa).

Residue cysteine 88 is the Proton acceptor of the active site. Substrate-binding positions include 89-90, histidine 208, and aspartate 232; that span reads GH. Residue cysteine 236 is the Proton donor of the active site. 237–238 is a binding site for substrate; that stretch reads GT.

Belongs to the proline racemase family.

It catalyses the reaction trans-4-hydroxy-L-proline = cis-4-hydroxy-D-proline. In terms of biological role, catalyzes the epimerization of trans-4-hydroxy-L-proline (t4LHyp) to cis-4-hydroxy-D-proline (c4DHyp). Is likely involved in a degradation pathway that converts t4LHyp to alpha-ketoglutarate. Displays no proline racemase activity. This chain is 4-hydroxyproline 2-epimerase, found in Burkholderia cenocepacia (strain ATCC BAA-245 / DSM 16553 / LMG 16656 / NCTC 13227 / J2315 / CF5610) (Burkholderia cepacia (strain J2315)).